The chain runs to 354 residues: Muscleblind-like protein 3 (354 aa).

4 consecutive C3H1-type zinc fingers follow at residues 14-42 (WLTLEVCREFQRGTCSRADADCKFAHPPR), 48-74 (NGRVVACFDSLKGRCTRENCKYLHPPP), 174-202 (SDKLEVCREFQRGNCTRGENDCRYAHPTD), and 210-236 (DNTVTICMDYIKGRCSREKCKYFHPPA).

It belongs to the muscleblind family. As to expression, highly expressed in the placenta.

It is found in the nucleus. It localises to the cytoplasm. Mediates pre-mRNA alternative splicing regulation. Acts either as activator or repressor of splicing on specific pre-mRNA targets. Inhibits cardiac troponin-T (TNNT2) pre-mRNA exon inclusion but induces insulin receptor (IR) pre-mRNA exon inclusion in muscle. Antagonizes the alternative splicing activity pattern of CELF proteins. May play a role in myotonic dystrophy pathophysiology (DM). Could inhibit terminal muscle differentiation, acting at approximately the time of myogenin induction. This chain is Muscleblind-like protein 3 (MBNL3), found in Homo sapiens (Human).